Consider the following 485-residue polypeptide: Aspartyl/glutamyl-tRNA(Asn/Gln) amidotransferase subunit B (485 aa).

Belongs to the GatB/GatE family. GatB subfamily. Heterotrimer of A, B and C subunits.

It catalyses the reaction L-glutamyl-tRNA(Gln) + L-glutamine + ATP + H2O = L-glutaminyl-tRNA(Gln) + L-glutamate + ADP + phosphate + H(+). The enzyme catalyses L-aspartyl-tRNA(Asn) + L-glutamine + ATP + H2O = L-asparaginyl-tRNA(Asn) + L-glutamate + ADP + phosphate + 2 H(+). Its function is as follows. Allows the formation of correctly charged Asn-tRNA(Asn) or Gln-tRNA(Gln) through the transamidation of misacylated Asp-tRNA(Asn) or Glu-tRNA(Gln) in organisms which lack either or both of asparaginyl-tRNA or glutaminyl-tRNA synthetases. The reaction takes place in the presence of glutamine and ATP through an activated phospho-Asp-tRNA(Asn) or phospho-Glu-tRNA(Gln). This chain is Aspartyl/glutamyl-tRNA(Asn/Gln) amidotransferase subunit B, found in Ruminiclostridium cellulolyticum (strain ATCC 35319 / DSM 5812 / JCM 6584 / H10) (Clostridium cellulolyticum).